A 156-amino-acid chain; its full sequence is ATP synthase subunit b (156 aa).

Residues 13 to 33 (AFIIFVWFCMKFVWPPLMNAI) traverse the membrane as a helical segment.

This sequence belongs to the ATPase B chain family. As to quaternary structure, F-type ATPases have 2 components, F(1) - the catalytic core - and F(0) - the membrane proton channel. F(1) has five subunits: alpha(3), beta(3), gamma(1), delta(1), epsilon(1). F(0) has three main subunits: a(1), b(2) and c(10-14). The alpha and beta chains form an alternating ring which encloses part of the gamma chain. F(1) is attached to F(0) by a central stalk formed by the gamma and epsilon chains, while a peripheral stalk is formed by the delta and b chains.

The protein localises to the cell inner membrane. F(1)F(0) ATP synthase produces ATP from ADP in the presence of a proton or sodium gradient. F-type ATPases consist of two structural domains, F(1) containing the extramembraneous catalytic core and F(0) containing the membrane proton channel, linked together by a central stalk and a peripheral stalk. During catalysis, ATP synthesis in the catalytic domain of F(1) is coupled via a rotary mechanism of the central stalk subunits to proton translocation. In terms of biological role, component of the F(0) channel, it forms part of the peripheral stalk, linking F(1) to F(0). The polypeptide is ATP synthase subunit b (Shewanella woodyi (strain ATCC 51908 / MS32)).